A 482-amino-acid chain; its full sequence is Anaerobic nitric oxide reductase flavorubredoxin (482 aa).

The interval 30–210 (LRGSSYNSYL…PFSRLVTPKI (181 aa)) is zinc metallo-hydrolase. Residues H79, E81, D83, H147, D166, and H227 each coordinate Fe cation. Residues 254–393 (ITIFYDTMSN…LCRQHGRDIA (140 aa)) form the Flavodoxin-like domain. FMN-binding positions include 260-264 (TMSNN) and 342-369 (AFGS…EMSL). Residues 426-477 (GPSMQCSVCQWIYDPAKGEPLQDVAPGTPWSDVPDNFLCPECSLGKDVFDVL) form the Rubredoxin-like domain. Residues C431, C434, C464, and C467 each contribute to the Fe cation site.

It in the N-terminal section; belongs to the zinc metallo-hydrolase group 3 family. Homotetramer. Fe cation serves as cofactor. FMN is required as a cofactor.

It is found in the cytoplasm. Its pathway is nitrogen metabolism; nitric oxide reduction. In terms of biological role, anaerobic nitric oxide reductase; uses NADH to detoxify nitric oxide (NO), protecting several 4Fe-4S NO-sensitive enzymes. Has at least 2 reductase partners, only one of which (NorW, flavorubredoxin reductase) has been identified. NO probably binds to the di-iron center; electrons enter from the NorW at rubredoxin and are transferred sequentially to the FMN center and the di-iron center. Also able to function as an aerobic oxygen reductase. The protein is Anaerobic nitric oxide reductase flavorubredoxin of Citrobacter koseri (strain ATCC BAA-895 / CDC 4225-83 / SGSC4696).